The primary structure comprises 133 residues: Small ribosomal subunit protein uS11 (133 aa).

Residues 114-133 are disordered; that stretch reads VTPIPHDGTRPPGGKRGRRV.

It belongs to the universal ribosomal protein uS11 family. In terms of assembly, part of the 30S ribosomal subunit.

In terms of biological role, located on the platform of the 30S subunit. This is Small ribosomal subunit protein uS11 from Archaeoglobus fulgidus (strain ATCC 49558 / DSM 4304 / JCM 9628 / NBRC 100126 / VC-16).